The primary structure comprises 161 residues: Protein-export protein SecB (161 aa).

The interval 141–161 is disordered; the sequence is KKQQETAGEQPDQPADTITRH.

This sequence belongs to the SecB family. Homotetramer, a dimer of dimers. One homotetramer interacts with 1 SecA dimer.

It is found in the cytoplasm. Functionally, one of the proteins required for the normal export of preproteins out of the cell cytoplasm. It is a molecular chaperone that binds to a subset of precursor proteins, maintaining them in a translocation-competent state. It also specifically binds to its receptor SecA. This chain is Protein-export protein SecB, found in Nitrosomonas europaea (strain ATCC 19718 / CIP 103999 / KCTC 2705 / NBRC 14298).